A 162-amino-acid polypeptide reads, in one-letter code: Dihydrofolate reductase (162 aa).

Residues 3-161 (KITLIAACAE…TRYAFVHYLR (159 aa)) enclose the DHFR domain. 7–9 (IAA) contributes to the substrate binding site. NADP(+)-binding positions include 8-9 (AA) and 16-21 (IGAGNA). Asp29 contributes to the substrate binding site. 45–48 (GRKT) is a binding site for NADP(+). Arg60 contacts substrate. Residues 65–68 (ISRQ) and 98–103 (MGGAQI) contribute to the NADP(+) site. Thr117 is a binding site for substrate.

It belongs to the dihydrofolate reductase family.

The enzyme catalyses (6S)-5,6,7,8-tetrahydrofolate + NADP(+) = 7,8-dihydrofolate + NADPH + H(+). It functions in the pathway cofactor biosynthesis; tetrahydrofolate biosynthesis; 5,6,7,8-tetrahydrofolate from 7,8-dihydrofolate: step 1/1. Key enzyme in folate metabolism. Catalyzes an essential reaction for de novo glycine and purine synthesis, and for DNA precursor synthesis. The sequence is that of Dihydrofolate reductase (folA) from Neisseria meningitidis serogroup B (strain ATCC BAA-335 / MC58).